The following is a 71-amino-acid chain: Small ribosomal subunit protein bS21 (71 aa).

It belongs to the bacterial ribosomal protein bS21 family.

The protein is Small ribosomal subunit protein bS21 of Dichelobacter nodosus (strain VCS1703A).